The following is a 297-amino-acid chain: MISPAKINLGLEIPFKRLDGFHEIRSVFLKISWGDDIEIEPASNGVFELFSNNEIILEKRKLYDQVSERGDIKNNILYKTFIKARSLFPELPGVKIHLTKRISPAGGLGGGSTNAASLLNFLFSWRPFFTSDEMFVLAAEIGSDVPFFLGEGHAFVTGKGEILEEIEVHHGQGILALTPQVMNTSEMYSLLKKPLQESASQKNGNTLSKNLISILKNGDWSSLQGRLWNDFEPVAFQLHPELGVLKDKFLEFGSSYCSLTGSGSSMYGLVQGLEIQEELLQRLRQEFSNLTFVRFNF.

Catalysis depends on residues Lys6 and Asp144.

It belongs to the GHMP kinase family. IspE subfamily.

It carries out the reaction 4-CDP-2-C-methyl-D-erythritol + ATP = 4-CDP-2-C-methyl-D-erythritol 2-phosphate + ADP + H(+). It functions in the pathway isoprenoid biosynthesis; isopentenyl diphosphate biosynthesis via DXP pathway; isopentenyl diphosphate from 1-deoxy-D-xylulose 5-phosphate: step 3/6. Its function is as follows. Catalyzes the phosphorylation of the position 2 hydroxy group of 4-diphosphocytidyl-2C-methyl-D-erythritol. The sequence is that of 4-diphosphocytidyl-2-C-methyl-D-erythritol kinase from Leptospira interrogans serogroup Icterohaemorrhagiae serovar Lai (strain 56601).